The sequence spans 543 residues: Formate--tetrahydrofolate ligase (543 aa).

Position 54–61 (54–61 (TPAGEGKT)) interacts with ATP.

It belongs to the formate--tetrahydrofolate ligase family.

The catalysed reaction is (6S)-5,6,7,8-tetrahydrofolate + formate + ATP = (6R)-10-formyltetrahydrofolate + ADP + phosphate. It participates in one-carbon metabolism; tetrahydrofolate interconversion. The sequence is that of Formate--tetrahydrofolate ligase from Thermus thermophilus (strain ATCC BAA-163 / DSM 7039 / HB27).